We begin with the raw amino-acid sequence, 290 residues long: D-tagatose-1,6-bisphosphate aldolase subunit KbaY (290 aa).

D82 serves as the catalytic Proton donor. Positions 83 and 180 each coordinate Zn(2+). G181 provides a ligand contact to dihydroxyacetone phosphate. H208 is a Zn(2+) binding site. Dihydroxyacetone phosphate is bound by residues 209-211 (GAS) and 230-233 (NVAT).

The protein belongs to the class II fructose-bisphosphate aldolase family. TagBP aldolase KbaY subfamily. In terms of assembly, homotetramer. Forms a complex with KbaZ. The cofactor is Zn(2+).

The catalysed reaction is D-tagatofuranose 1,6-bisphosphate = D-glyceraldehyde 3-phosphate + dihydroxyacetone phosphate. Its pathway is carbohydrate metabolism; D-tagatose 6-phosphate degradation; D-glyceraldehyde 3-phosphate and glycerone phosphate from D-tagatose 6-phosphate: step 2/2. In terms of biological role, catalytic subunit of the tagatose-1,6-bisphosphate aldolase KbaYZ, which catalyzes the reversible aldol condensation of dihydroxyacetone phosphate (DHAP or glycerone-phosphate) with glyceraldehyde 3-phosphate (G3P) to produce tagatose 1,6-bisphosphate (TBP). Requires KbaZ subunit for full activity and stability. The chain is D-tagatose-1,6-bisphosphate aldolase subunit KbaY from Citrobacter koseri (strain ATCC BAA-895 / CDC 4225-83 / SGSC4696).